Here is a 165-residue protein sequence, read N- to C-terminus: uncharacterized protein (165 aa).

The region spanning Leu-8 to Pro-159 is the N-acetyltransferase domain.

This is an uncharacterized protein from Shouchella clausii (strain KSM-K16) (Alkalihalobacillus clausii).